The sequence spans 246 residues: Metallo-beta-lactamase IMP-1 (246 aa).

A signal peptide spans 1-18; sequence MSKLSVFFIFLFCSIATA. Positions 95, 97, 99, 157, and 176 each coordinate Zn(2+). A beta-lactam is bound by residues Lys179 and Asn185. Position 215 (His215) interacts with Zn(2+).

This sequence belongs to the metallo-beta-lactamase superfamily. Class-B beta-lactamase family. Monomer. The cofactor is Zn(2+).

It localises to the periplasm. The enzyme catalyses a beta-lactam + H2O = a substituted beta-amino acid. Its activity is regulated as follows. Inhibited by captopril stereoisomers, Hg(2+), Fe(2+), Cu(2+), chelating agents such as EDTA, dansyl derivatives, including dansyl-C4SH, bisthiazolidines, mercaptoacetic acid and by PMPC phosphonates. Inhibited by 3-(3-mercaptopropionylsulfanyl)-propionic acid pentafluorophenyl ester, via a covalent binding to Lys-179. Not susceptible to inactivation by the beta-lactamase-blocking agents clavulanic acid or cloxacillin. Functionally, class B beta-lactamase which confers resistance to the beta-lactam antibiotics, including penicillins, cephalosporins and carbapenems. Acts via hydrolysis of the beta-lactam ring. Has penicillin-, cephalosporin- and carbapenem-hydrolyzing activities. Has endoribonuclease activity, cleaving substrate RNAs preferentially between U/C and A, in vitro. In Serratia marcescens, this protein is Metallo-beta-lactamase IMP-1.